We begin with the raw amino-acid sequence, 382 residues long: Proton extrusion protein PxcA (382 aa).

The next 4 helical transmembrane spans lie at 162 to 182 (ILLL…TYIV), 257 to 277 (AIKN…VCLV), 305 to 325 (IILF…TVLL), and 340 to 360 (FILL…KYWI).

It belongs to the CemA family.

Its subcellular location is the cell inner membrane. Its function is as follows. Required for H(+) efflux immediately after light irradiation to form a rapid H(+) concentration gradient across the thylakoid membranes. Together with PxcL, contributes to transient H(+) uptake following dark to light transition. The chain is Proton extrusion protein PxcA from Parasynechococcus marenigrum (strain WH8102).